Reading from the N-terminus, the 201-residue chain is dITP/XTP pyrophosphatase (201 aa).

Residue Ser8 to Lys13 participates in substrate binding. Residues Glu40 and Asp69 each contribute to the Mg(2+) site. The Proton acceptor role is filled by Asp69. Substrate contacts are provided by residues Ser70, Phe155 to Asp158, Lys178, and His183 to Arg184.

Belongs to the HAM1 NTPase family. As to quaternary structure, homodimer. The cofactor is Mg(2+).

It carries out the reaction XTP + H2O = XMP + diphosphate + H(+). It catalyses the reaction dITP + H2O = dIMP + diphosphate + H(+). The catalysed reaction is ITP + H2O = IMP + diphosphate + H(+). Functionally, pyrophosphatase that catalyzes the hydrolysis of nucleoside triphosphates to their monophosphate derivatives, with a high preference for the non-canonical purine nucleotides XTP (xanthosine triphosphate), dITP (deoxyinosine triphosphate) and ITP. Seems to function as a house-cleaning enzyme that removes non-canonical purine nucleotides from the nucleotide pool, thus preventing their incorporation into DNA/RNA and avoiding chromosomal lesions. The protein is dITP/XTP pyrophosphatase of Ralstonia nicotianae (strain ATCC BAA-1114 / GMI1000) (Ralstonia solanacearum).